The primary structure comprises 729 residues: DNA topoisomerase 3 (729 aa).

The region spanning 3-136 is the Toprim domain; it reads KKAVLAEKPS…VKRLWISSVT (134 aa). Mg(2+)-binding residues include glutamate 9 and aspartate 105. Residues 153 to 590 enclose the Topo IA-type catalytic domain; the sequence is YETLYAAAAA…EMKEYAKAVV (438 aa). The interaction with DNA stretch occupies residues 187-192; sequence SCGRVQ. Catalysis depends on tyrosine 311, which acts as the O-(5'-phospho-DNA)-tyrosine intermediate. Residues 680–708 form a disordered region; the sequence is FEQRRKQNKHKNVSKREVQSYMKKQNKQD.

This sequence belongs to the type IA topoisomerase family. Requires Mg(2+) as cofactor.

The enzyme catalyses ATP-independent breakage of single-stranded DNA, followed by passage and rejoining.. Releases the supercoiling and torsional tension of DNA, which is introduced during the DNA replication and transcription, by transiently cleaving and rejoining one strand of the DNA duplex. Introduces a single-strand break via transesterification at a target site in duplex DNA. The scissile phosphodiester is attacked by the catalytic tyrosine of the enzyme, resulting in the formation of a DNA-(5'-phosphotyrosyl)-enzyme intermediate and the expulsion of a 3'-OH DNA strand. The free DNA strand then undergoes passage around the unbroken strand, thus removing DNA supercoils. Finally, in the religation step, the DNA 3'-OH attacks the covalent intermediate to expel the active-site tyrosine and restore the DNA phosphodiester backbone. This Shouchella clausii (strain KSM-K16) (Alkalihalobacillus clausii) protein is DNA topoisomerase 3.